Consider the following 2119-residue polypeptide: Outer kinetochore KNL1 complex subunit KNL1 (2119 aa).

A disordered region spans residues 1–59; the sequence is MDGVYSEANEENDNTQRPVRRQHSSILKPPRSPLQDLKCGNQTNQEPNPPRKRKSSRRV. The interval 1 to 202 is may mediate oligomerization; that stretch reads MDGVYSEANE…SDNFIKRLKT (202 aa). 2 interaction with microtubules regions span residues 17–34 and 53–80; these read RPVR…RSPL and RKSS…ERNS. The tract at residues 23–80 is interaction with PP1CA; contains the protein phosphatase 1 (PP1) interaction motifs SILK, RVXF and phi-phi; the sequence is HSSILKPPRSPLQDLKCGNQTNQEPNPPRKRKSSRRVSFADTIKVFQTESHMKTERNS. Residues Ser-24, Ser-32, and Ser-60 each carry the phosphoserine modification. The interval 124 to 140 is interaction with BUB1; sequence ENQMDLTASHTVMITKG. Residues 160-179 are interaction with BUB1B; that stretch reads ENLKHHAANSRIKKDLACST. Ser-538 carries the phosphoserine modification. Residues Thr-540 and Thr-739 each carry the phosphothreonine modification. Repeat 1 spans residues 723–827; that stretch reads DKTILFSEGN…MTKSHTVFID (105 aa). The interval 723-1027 is 2 X 104 AA approximate repeats; sequence DKTILFSEGN…VTRSHTVFID (305 aa). Phosphoserine is present on residues Ser-794 and Ser-878. The stretch at 923-1027 is repeat 2; the sequence is KSITFPENDK…VTRSHTVFID (105 aa). Residues Ser-1243 and Ser-1464 each carry the phosphoserine modification. The tract at residues 1557-1583 is disordered; it reads SQRESLPSENKTENCRAQKRTRVEEND. The segment covering 1566 to 1583 has biased composition (basic and acidic residues); it reads NKTENCRAQKRTRVEEND. A Nuclear localization signal motif is present at residues 1577-1590; sequence TRVEENDVTNEKKI. 3 positions are modified to phosphoserine: Ser-1616, Ser-1627, and Ser-1642. A required for interaction with ZWINT region spans residues 1763–1890; it reads KVKDYSDEEL…FLEVETQKTQ (128 aa). A coiled-coil region spans residues 1799–1890; it reads VALYNKLVHS…FLEVETQKTQ (92 aa). Residues 1873 to 2093 form an interaction with NSL1, DSN1 and required for assembly into the outer kinetochore region; it reads EEEELQRKFL…GKTGHDEIAA (221 aa).

In terms of assembly, component of the KNL1 complex composed of KNL1 and ZWINT. Part of the ten-subunit outer kinetochore KMN network that includes the KNL1, MIS12 and NDC80 complexes; a bioriented kinetochore contains approximately 150 copies of the network. Interacts (via C-terminus) with the MIS12 complex subunits NSL1 (via C-terminus), PMF1 and DSN1; the interaction is direct. Interacts (via N-terminal region) with BUB1B (via BUB1 N-terminal domain); the interaction is direct and is required for cell cycle arrest upon activation of the mitotic spindle assembly checkpoint. Interacts (via N-terminal region) with BUB1 (via BUB1 N-terminal domain); the interaction is direct. Interacts with the protein phosphatase PP1 subunit PPP1CA; the interaction is direct and mutually exclusive with binding to microtubules. Interacts with the protein phosphatase PP1 subunit PPP1CC; the interaction is direct and mutually exclusive with binding to microtubules. Post-translationally, phosphorylation by AURKB negatively regulates its interaction with protein phosphatase 1 (PP1) subunit PPP1CA and with microtubules. In terms of tissue distribution, expressed in oocytes during meiotic progression (at protein level). Expressed during spermatogenesis.

It is found in the nucleus. The protein resides in the chromosome. Its subcellular location is the centromere. It localises to the kinetochore. The protein localises to the cytoplasm. Its function is as follows. Acts as a component of the outer kinetochore KNL1 complex that serves as a docking point for spindle assembly checkpoint components and mediates microtubule-kinetochore interactions. Kinetochores, consisting of a centromere-associated inner segment and a microtubule-contacting outer segment, play a crucial role in chromosome segregation by mediating the physical connection between centromeric DNA and spindle microtubules. The outer kinetochore is made up of the ten-subunit KMN network, comprising the MIS12, NDC80 and KNL1 complexes, and auxiliary microtubule-associated components; together they connect the outer kinetochore with the inner kinetochore, bind microtubules, and mediate interactions with mitotic checkpoint proteins that delay anaphase until chromosomes are bioriented on the spindle. Required for kinetochore binding by a distinct subset of kMAPs (kinetochore-bound microtubule-associated proteins) and motors. Acts in coordination with CENPK to recruit the NDC80 complex to the outer kinetochore. Can bind either to microtubules or to the protein phosphatase 1 (PP1) catalytic subunits PPP1CA and PPP1CC (via overlapping binding sites), it has higher affinity for PP1. Recruits MAD2L1 to the kinetochore and also directly links BUB1 and BUB1B to the kinetochore. In addition to orienting mitotic chromosomes, it is also essential for alignment of homologous chromosomes during meiotic metaphase I. In meiosis I, required to activate the spindle assembly checkpoint at unattached kinetochores to correct erroneous kinetochore-microtubule attachments. In Mus musculus (Mouse), this protein is Outer kinetochore KNL1 complex subunit KNL1.